Consider the following 141-residue polypeptide: NADH dehydrogenase [ubiquinone] 1 alpha subcomplex subunit 11 (141 aa).

Transmembrane regions (helical) follow at residues 21–43 (KTYITTALGGICGIIGSAYRVSL) and 58–80 (RYTFTAAAIGAMFGLTTCVSAQV).

Belongs to the complex I NDUFA11 subunit family. In terms of assembly, complex I is composed of 45 different subunits.

The protein resides in the mitochondrion inner membrane. In terms of biological role, accessory subunit of the mitochondrial membrane respiratory chain NADH dehydrogenase (Complex I), that is believed not to be involved in catalysis. Complex I functions in the transfer of electrons from NADH to the respiratory chain. The immediate electron acceptor for the enzyme is believed to be ubiquinone. The sequence is that of NADH dehydrogenase [ubiquinone] 1 alpha subcomplex subunit 11 (Ndufa11) from Mus musculus (Mouse).